The chain runs to 373 residues: MAAVTYELIKTCKQTGARLGKVHTPHGSFDTPVFMPVGTLATVKGMSPEELKEIDARIILSNTYHCYLRPGQDIVKQAGGLHGFMNWDRPILTDSGGFQVFSLSGLRKITEEGVTFRSHLDGSKHVFTPESVMDIENDLGADIIMAFDECAPYPAEYDYVKKSMERTTRWAKRCKEAHTNTEKQSLFGIIQGGMYKELRIESANQLKELDFPGYAIGGLSVGEPAEIMYEVLDYTAPLMPADKPRYLMGVGTPDYLIEGAIRGIDMFDCVLPTRIGRNGTVLTSNGRVIIRDAKYSRDFSKLDPECDCYVCRNYSRAYIRHLIKCGELLGLRLTTWHNLYFLINLMKQVRQAIMDDKLASFRDEFYLKYGYTK.

Asp-94 (proton acceptor) is an active-site residue. Substrate contacts are provided by residues 94-98, Asp-148, Gln-191, and Gly-218; that span reads DSGGF. The RNA binding stretch occupies residues 249 to 255; it reads GVGTPDY. Asp-268 acts as the Nucleophile in catalysis. Positions 273 to 277 are RNA binding; important for wobble base 34 recognition; that stretch reads TRIGR. The Zn(2+) site is built by Cys-306, Cys-308, Cys-311, and His-337.

This sequence belongs to the queuine tRNA-ribosyltransferase family. As to quaternary structure, homodimer. Within each dimer, one monomer is responsible for RNA recognition and catalysis, while the other monomer binds to the replacement base PreQ1. It depends on Zn(2+) as a cofactor.

It carries out the reaction 7-aminomethyl-7-carbaguanine + guanosine(34) in tRNA = 7-aminomethyl-7-carbaguanosine(34) in tRNA + guanine. Its pathway is tRNA modification; tRNA-queuosine biosynthesis. Its function is as follows. Catalyzes the base-exchange of a guanine (G) residue with the queuine precursor 7-aminomethyl-7-deazaguanine (PreQ1) at position 34 (anticodon wobble position) in tRNAs with GU(N) anticodons (tRNA-Asp, -Asn, -His and -Tyr). Catalysis occurs through a double-displacement mechanism. The nucleophile active site attacks the C1' of nucleotide 34 to detach the guanine base from the RNA, forming a covalent enzyme-RNA intermediate. The proton acceptor active site deprotonates the incoming PreQ1, allowing a nucleophilic attack on the C1' of the ribose to form the product. After dissociation, two additional enzymatic reactions on the tRNA convert PreQ1 to queuine (Q), resulting in the hypermodified nucleoside queuosine (7-(((4,5-cis-dihydroxy-2-cyclopenten-1-yl)amino)methyl)-7-deazaguanosine). The chain is Queuine tRNA-ribosyltransferase from Ruminiclostridium cellulolyticum (strain ATCC 35319 / DSM 5812 / JCM 6584 / H10) (Clostridium cellulolyticum).